Here is a 508-residue protein sequence, read N- to C-terminus: Photosystem II CP47 reaction center protein (508 aa).

Transmembrane regions (helical) follow at residues 21–36 (SVHLMHTALVSGWAGS), 101–115 (IILSGLLFLAAIWHW), 140–156 (GIHLFLSGVLCFSFGAF), 203–218 (IAAGVLGILAGLFHLS), 237–252 (VLSSSIAAVFFAAFVV), and 457–472 (TFALIFFFGHIWHGAR).

This sequence belongs to the PsbB/PsbC family. PsbB subfamily. PSII is composed of 1 copy each of membrane proteins PsbA, PsbB, PsbC, PsbD, PsbE, PsbF, PsbH, PsbI, PsbJ, PsbK, PsbL, PsbM, PsbT, PsbX, PsbY, PsbZ, Psb30/Ycf12, at least 3 peripheral proteins of the oxygen-evolving complex and a large number of cofactors. It forms dimeric complexes. Binds multiple chlorophylls. PSII binds additional chlorophylls, carotenoids and specific lipids. is required as a cofactor.

The protein resides in the plastid. The protein localises to the chloroplast thylakoid membrane. One of the components of the core complex of photosystem II (PSII). It binds chlorophyll and helps catalyze the primary light-induced photochemical processes of PSII. PSII is a light-driven water:plastoquinone oxidoreductase, using light energy to abstract electrons from H(2)O, generating O(2) and a proton gradient subsequently used for ATP formation. The sequence is that of Photosystem II CP47 reaction center protein from Adiantum capillus-veneris (Maidenhair fern).